The primary structure comprises 202 residues: NADH-quinone oxidoreductase subunit C (202 aa).

This sequence belongs to the complex I 30 kDa subunit family. In terms of assembly, NDH-1 is composed of 14 different subunits. Subunits NuoB, C, D, E, F, and G constitute the peripheral sector of the complex.

Its subcellular location is the cell inner membrane. The enzyme catalyses a quinone + NADH + 5 H(+)(in) = a quinol + NAD(+) + 4 H(+)(out). In terms of biological role, NDH-1 shuttles electrons from NADH, via FMN and iron-sulfur (Fe-S) centers, to quinones in the respiratory chain. The immediate electron acceptor for the enzyme in this species is believed to be ubiquinone. Couples the redox reaction to proton translocation (for every two electrons transferred, four hydrogen ions are translocated across the cytoplasmic membrane), and thus conserves the redox energy in a proton gradient. This chain is NADH-quinone oxidoreductase subunit C, found in Bartonella quintana (strain Toulouse) (Rochalimaea quintana).